We begin with the raw amino-acid sequence, 374 residues long: Tuliposide A-converting enzyme b1, amyloplastic (374 aa).

Residues 1–68 (MSVALFCGPP…TNSSLSPSPT (68 aa)) constitute an amyloplast transit peptide. Ser-226 (acyl-ester intermediate) is an active-site residue. Catalysis depends on charge relay system residues Asp-316 and His-348.

Belongs to the AB hydrolase superfamily. Homodimer. Highly expressed in pistil and bulb scales. Lower expression in stem, and barely detected in root, leaf, petal and stamen.

The protein resides in the plastid. It localises to the amyloplast. The enzyme catalyses 6-tuliposide A = tulipalin A + D-glucose. Functionally, lactone-forming carboxylesterases, specifically catalyzing intramolecular transesterification, but not hydrolysis. Involved in the biosynthesis of tulipalins, defensive chemicals that show antimicrobial activities against a broad range of strains of bacteria and fungi. Substrates are 6-tuliposide A &gt; 6-tuliposide B. The sequence is that of Tuliposide A-converting enzyme b1, amyloplastic (TCEA-B1) from Tulipa gesneriana (Garden tulip).